Here is a 562-residue protein sequence, read N- to C-terminus: Arf-GAP domain and FG repeat-containing protein 1 (562 aa).

One can recognise an Arf-GAP domain in the interval 11–135; it reads EKHLKMLRDM…WYVPPEQAKV (125 aa). The C4-type zinc finger occupies 29 to 52; it reads CFDCDQRGPTYVNMTVGSFVCTSC. Phosphoserine is present on Ser167. The tract at residues 168-194 is disordered; sequence APALHLNKGTPSQSPVVGRSQAQQQEK. The segment covering 176 to 191 has biased composition (polar residues); it reads GTPSQSPVVGRSQAQQ. Position 177 is a phosphothreonine (Thr177). Phosphoserine is present on residues Ser181 and Ser362. Residue Ser367 is glycosylated (O-linked (GlcNAc) serine).

Interacts with EPS15R and EPS15. Interacts with FCHO1. Post-translationally, O-glycosylated.

It is found in the nucleus. Its subcellular location is the cytoplasmic vesicle. Functionally, required for vesicle docking or fusion during acrosome biogenesis. May play a role in RNA trafficking or localization. The protein is Arf-GAP domain and FG repeat-containing protein 1 (AGFG1) of Bos taurus (Bovine).